A 942-amino-acid chain; its full sequence is Protein ZDS2 (942 aa).

The segment at 1–28 (MVLMEDMQNKDGHNTVENSSGGTDSNNN) is disordered. Residues 15–28 (TVENSSGGTDSNNN) show a composition bias toward polar residues. Phosphoserine is present on S50. Disordered regions lie at residues 91 to 142 (SRNS…DDSI), 483 to 541 (SQES…NSSN), 617 to 654 (VVSS…KNSL), 682 to 728 (VKKE…DIDT), and 788 to 817 (SRDT…ISTL). Residues 99 to 122 (SSKESLQESLHEENIIRSEQKEEQ) show a composition bias toward basic and acidic residues. Residues 123–134 (GSEDNDAYEEGD) show a composition bias toward acidic residues. Composition is skewed to low complexity over residues 483–497 (SQES…SNNS), 518–541 (SSSE…NSSN), and 617–627 (VVSSSESQPSK). A compositionally biased stretch (basic residues) spans 682–704 (VKKELKKKASHSSLSKFRKSPKK). Over residues 807–816 (TSPTAPQIST) the composition is skewed to polar residues.

The protein to yeast ZDS1/NRC1/CES1. Interacts with SKG6.

Its function is as follows. Acts as a negative regulator of polarized growth via an alternative mechanism to ZDS1. In heat-stressed cells appears to play a role in localizing BCY1 to the cytoplasm. Seems to interact with, and down-regulate, CDC42. Also acts as a suppressor of PKC1. May act as an integration point for distinct signaling pathways helping to maintain a balance among these different pathways. This Saccharomyces cerevisiae (strain ATCC 204508 / S288c) (Baker's yeast) protein is Protein ZDS2 (ZDS2).